The following is a 474-amino-acid chain: uncharacterized protein (474 aa).

The segment covering 1–14 (MGSRYPSHQLSNGL) has biased composition (polar residues). Positions 1-137 (MGSRYPSHQL…QSGGVTRQNS (137 aa)) are disordered. Ser45 carries the post-translational modification Phosphoserine. Polar residues-rich tracts occupy residues 73-83 (RSGSFAGTAQS), 97-113 (SLAS…NSGP), and 125-137 (SGPQ…RQNS). Ser169 is modified (phosphoserine). The next 2 membrane-spanning stretches (helical) occupy residues 210-230 (VLWL…FILG) and 236-256 (ILLV…IWNI).

It is found in the membrane. This is an uncharacterized protein from Arabidopsis thaliana (Mouse-ear cress).